The following is a 91-amino-acid chain: MEARDVLKRPVITEKSSEAMAEDKYTFDVDTRANKTQVKIAVEEIFDVKVANVNIINYKPKKKRMGRYQGYTNKRRKAIVTLKEGSIDLFN.

It belongs to the universal ribosomal protein uL23 family. Part of the 50S ribosomal subunit. Contacts protein L29, and trigger factor when it is bound to the ribosome.

Functionally, one of the early assembly proteins it binds 23S rRNA. One of the proteins that surrounds the polypeptide exit tunnel on the outside of the ribosome. Forms the main docking site for trigger factor binding to the ribosome. This chain is Large ribosomal subunit protein uL23, found in Staphylococcus haemolyticus (strain JCSC1435).